The sequence spans 118 residues: Lutropin subunit beta (118 aa).

Intrachain disulfides connect cysteine 9–cysteine 57, cysteine 23–cysteine 72, cysteine 26–cysteine 110, cysteine 34–cysteine 88, cysteine 38–cysteine 90, and cysteine 93–cysteine 100. N-linked (GlcNAc...) asparagine glycosylation occurs at asparagine 13.

Belongs to the glycoprotein hormones subunit beta family. As to quaternary structure, heterodimer of a common alpha chain and a unique beta chain which confers biological specificity to thyrotropin, lutropin, follitropin and gonadotropin.

The protein resides in the secreted. Functionally, promotes spermatogenesis and ovulation by stimulating the testes and ovaries to synthesize steroids. The sequence is that of Lutropin subunit beta (LHB) from Balaenoptera acutorostrata (Common minke whale).